The chain runs to 74 residues: Translational regulator CsrA (74 aa).

The protein belongs to the CsrA/RsmA family. In terms of assembly, homodimer; the beta-strands of each monomer intercalate to form a hydrophobic core, while the alpha-helices form wings that extend away from the core.

The protein resides in the cytoplasm. A translational regulator that binds mRNA to regulate translation initiation and/or mRNA stability. Usually binds in the 5'-UTR at or near the Shine-Dalgarno sequence preventing ribosome-binding, thus repressing translation. Its main target seems to be the major flagellin gene, while its function is anatagonized by FliW. The polypeptide is Translational regulator CsrA (Alkaliphilus oremlandii (strain OhILAs) (Clostridium oremlandii (strain OhILAs))).